Reading from the N-terminus, the 834-residue chain is Protein EFR3 homolog cmp44E (834 aa).

One copy of the HEAT repeat lies at Asn120 to Asn156. The chain crosses the membrane as a helical span at residues Leu595–Ile612.

Belongs to the EFR3 family. Expression during embryogenesis is ubiquitous with notably higher levels in the CNS and brain.

It is found in the membrane. In terms of biological role, an essential gene required for embryogenesis; required for cell viability. The chain is Protein EFR3 homolog cmp44E (stmA) from Drosophila melanogaster (Fruit fly).